A 422-amino-acid chain; its full sequence is Glutamyl-tRNA reductase (422 aa).

Residues threonine 49–arginine 52, serine 108, glutamate 113–glutamine 115, and glutamine 119 each bind substrate. Catalysis depends on cysteine 50, which acts as the Nucleophile. Glycine 188 to isoleucine 193 lines the NADP(+) pocket.

This sequence belongs to the glutamyl-tRNA reductase family. Homodimer.

The enzyme catalyses (S)-4-amino-5-oxopentanoate + tRNA(Glu) + NADP(+) = L-glutamyl-tRNA(Glu) + NADPH + H(+). It participates in porphyrin-containing compound metabolism; protoporphyrin-IX biosynthesis; 5-aminolevulinate from L-glutamyl-tRNA(Glu): step 1/2. Functionally, catalyzes the NADPH-dependent reduction of glutamyl-tRNA(Glu) to glutamate 1-semialdehyde (GSA). This Marinomonas sp. (strain MWYL1) protein is Glutamyl-tRNA reductase.